The chain runs to 194 residues: Adenylate kinase (194 aa).

10–15 is a binding site for ATP; that stretch reads GAGKGT. The interval 30 to 59 is NMP; it reads STGDMLRAAVAQQSEIGKRAKAVMDAGQLV. Residues threonine 31, arginine 36, 57–59, 85–88, and glutamine 92 each bind AMP; these read QLV and GYPR. The LID stretch occupies residues 126-142; sequence SRVAETIAKGGQVRSDD. Arginine 127 lines the ATP pocket. Arginine 139 and arginine 150 together coordinate AMP. Residue alanine 178 participates in ATP binding.

It belongs to the adenylate kinase family. Monomer.

It is found in the cytoplasm. It catalyses the reaction AMP + ATP = 2 ADP. It participates in purine metabolism; AMP biosynthesis via salvage pathway; AMP from ADP: step 1/1. Its function is as follows. Catalyzes the reversible transfer of the terminal phosphate group between ATP and AMP. Plays an important role in cellular energy homeostasis and in adenine nucleotide metabolism. The sequence is that of Adenylate kinase from Brucella anthropi (strain ATCC 49188 / DSM 6882 / CCUG 24695 / JCM 21032 / LMG 3331 / NBRC 15819 / NCTC 12168 / Alc 37) (Ochrobactrum anthropi).